Reading from the N-terminus, the 234-residue chain is Peroxiredoxin (234 aa).

Residues 6–161 (PLIGEKLPEM…ILRLLKALQV (156 aa)) enclose the Thioredoxin domain. The active-site Cysteine sulfenic acid (-SOH) intermediate is Cys-48. Substrate is bound at residue Arg-124. Cys-203 and Cys-209 are oxidised to a cystine.

It belongs to the peroxiredoxin family. Prx6 subfamily. In terms of assembly, homodecamer. Pentamer of dimers that assemble into a ring structure.

The protein resides in the cytoplasm. The catalysed reaction is a hydroperoxide + [thioredoxin]-dithiol = an alcohol + [thioredoxin]-disulfide + H2O. In terms of biological role, thiol-specific peroxidase that catalyzes the reduction of hydrogen peroxide and organic hydroperoxides to water and alcohols, respectively. Plays a role in cell protection against oxidative stress by detoxifying peroxides. The sequence is that of Peroxiredoxin from Ignicoccus hospitalis (strain KIN4/I / DSM 18386 / JCM 14125).